The sequence spans 247 residues: Cytochrome c oxidase subunit 2 (247 aa).

Residues 12 to 38 (DVPTPWGLYFQDSSTPNQEGIIELHDN) lie on the Mitochondrial intermembrane side of the membrane. A helical transmembrane segment spans residues 39 to 59 (IMFYLVLILCTVSWLLFSIVK). Residues 60 to 78 (DSSKNPLPHKYLVHGQTIE) lie on the Mitochondrial matrix side of the membrane. A helical membrane pass occupies residues 79–101 (IIWTILPAVVLLIIAFPSFILLY). Residues 102–247 (LCDEVISPAM…KEFLTWLNEQ (146 aa)) are Mitochondrial intermembrane-facing. H182, C217, E219, C221, H225, and M228 together coordinate Cu cation. E219 lines the Mg(2+) pocket.

It belongs to the cytochrome c oxidase subunit 2 family. As to quaternary structure, component of the cytochrome c oxidase (complex IV, CIV), a multisubunit enzyme composed of a catalytic core of 3 subunits and several supernumerary subunits. The complex exists as a monomer or a dimer and forms supercomplexes (SCs) in the inner mitochondrial membrane with ubiquinol-cytochrome c oxidoreductase (cytochrome b-c1 complex, complex III, CIII). Cu cation serves as cofactor. Post-translationally, the signal sequence of COX2 is processed by IMP1.

Its subcellular location is the mitochondrion inner membrane. It catalyses the reaction 4 Fe(II)-[cytochrome c] + O2 + 8 H(+)(in) = 4 Fe(III)-[cytochrome c] + 2 H2O + 4 H(+)(out). Its function is as follows. Component of the cytochrome c oxidase, the last enzyme in the mitochondrial electron transport chain which drives oxidative phosphorylation. The respiratory chain contains 3 multisubunit complexes succinate dehydrogenase (complex II, CII), ubiquinol-cytochrome c oxidoreductase (cytochrome b-c1 complex, complex III, CIII) and cytochrome c oxidase (complex IV, CIV), that cooperate to transfer electrons derived from NADH and succinate to molecular oxygen, creating an electrochemical gradient over the inner membrane that drives transmembrane transport and the ATP synthase. Cytochrome c oxidase is the component of the respiratory chain that catalyzes the reduction of oxygen to water. Electrons originating from reduced cytochrome c in the intermembrane space (IMS) are transferred via the dinuclear copper A center (CU(A)) of subunit 2 and heme A of subunit 1 to the active site in subunit 1, a binuclear center (BNC) formed by heme A3 and copper B (CU(B)). The BNC reduces molecular oxygen to 2 water molecules using 4 electrons from cytochrome c in the IMS and 4 protons from the mitochondrial matrix. The polypeptide is Cytochrome c oxidase subunit 2 (COX2) (Cyberlindnera mrakii (Yeast)).